The following is a 339-amino-acid chain: D-erythrose-4-phosphate dehydrogenase (339 aa).

NAD(+) is bound by residues R12–I13 and R81. Substrate contacts are provided by residues S154–T156, R200, T213–K214, and R236. C155 acts as the Nucleophile in catalysis. N318 provides a ligand contact to NAD(+).

As to quaternary structure, homotetramer.

The protein localises to the cytoplasm. It carries out the reaction D-erythrose 4-phosphate + NAD(+) + H2O = 4-phospho-D-erythronate + NADH + 2 H(+). It functions in the pathway cofactor biosynthesis; pyridoxine 5'-phosphate biosynthesis; pyridoxine 5'-phosphate from D-erythrose 4-phosphate: step 1/5. In terms of biological role, catalyzes the NAD-dependent conversion of D-erythrose 4-phosphate to 4-phosphoerythronate. In Escherichia coli (strain K12), this protein is D-erythrose-4-phosphate dehydrogenase (epd).